We begin with the raw amino-acid sequence, 317 residues long: Melanocyte-stimulating hormone receptor (317 aa).

The Extracellular portion of the chain corresponds to 1–37; it reads MAVQGSQRRLLGSLNSTPTAIPQLGLAANQTGARCLE. The N-linked (GlcNAc...) asparagine glycan is linked to Asn29. Residues 38 to 63 traverse the membrane as a helical segment; the sequence is VSISDGLFLSLGLVSLVENALVVATI. Residues 64-72 lie on the Cytoplasmic side of the membrane; the sequence is AKNRNLHSP. The helical transmembrane segment at 73-93 threads the bilayer; the sequence is MYCFICCLALSDLLVSGSNVL. Over 94–118 the chain is Extracellular; sequence ETAVILLLEAGALVARAAVLQQLDN. A helical transmembrane segment spans residues 119-140; sequence VIDVITCSSMLSSLCFLGAIAV. Over 141-163 the chain is Cytoplasmic; that stretch reads DRYISIFYALRYHSIVTLPRARR. Residues 164–183 form a helical membrane-spanning segment; sequence AVAAIWVASVVFSTLFIAYY. At 184 to 191 the chain is on the extracellular side; that stretch reads DHVAVLLC. Residues 192-211 traverse the membrane as a helical segment; the sequence is LVVFFLAMLVLMAVLYVHML. Topologically, residues 212–240 are cytoplasmic; the sequence is ARACQHAQGIARLHKRQRPVHQGFGLKGA. Residues 241–266 form a helical membrane-spanning segment; sequence VTLTILLGIFFLCWGPFFLHLTLIVL. At 267 to 279 the chain is on the extracellular side; sequence CPEHPTCGCIFKN. Residues 280 to 300 form a helical membrane-spanning segment; it reads FNLFLALIICNAIIDPLIYAF. The Cytoplasmic segment spans residues 301 to 317; the sequence is HSQELRRTLKEVLTCSW. Cys315 carries S-palmitoyl cysteine lipidation.

This sequence belongs to the G-protein coupled receptor 1 family. Interacts with MGRN1, but does not undergo MGRN1-mediated ubiquitination; this interaction competes with GNAS-binding and thus inhibits agonist-induced cAMP production. Interacts with OPN3; the interaction results in a decrease in MC1R-mediated cAMP signaling and ultimately a decrease in melanin production in melanocytes. In terms of tissue distribution, expressed in melanocytes. Expressed in corticoadrenal tissue.

The protein resides in the cell membrane. Receptor for MSH (alpha, beta and gamma) and ACTH. The activity of this receptor is mediated by G proteins which activate adenylate cyclase. Mediates melanogenesis, the production of eumelanin (black/brown) and phaeomelanin (red/yellow), via regulation of cAMP signaling in melanocytes. This chain is Melanocyte-stimulating hormone receptor (MC1R), found in Homo sapiens (Human).